The following is a 684-amino-acid chain: Probable metal-nicotianamine transporter YSL9 (684 aa).

Residues 1-10 are compositionally biased toward basic residues; sequence MKQERRRKRQ. The interval 1-55 is disordered; that stretch reads MKQERRRKRQPGPPRLELVVAHPREEEMAGLDGGGDAEEGATHARGGGGAPPPWR. A run of 14 helical transmembrane segments spans residues 58-78, 82-102, 130-150, 174-194, 234-254, 295-315, 341-361, 402-422, 430-450, 462-482, 515-535, 568-588, 612-632, and 642-662; these read LTAR…VIVM, LTTG…FVVL, CAVA…LLGL, GIAW…LALV, VNGF…QWFY, LVNL…WPLI, FICV…IVAL, LAFS…PMMF, VVIA…GAGL, IALF…AGLV, IIAQ…TFFL, FSAL…FAVA, VPFL…LIVF, and AALM…LWIF.

It belongs to the YSL (TC 2.A.67.2) family.

It is found in the membrane. Its function is as follows. May be involved in the transport of nicotianamine-chelated metals. This chain is Probable metal-nicotianamine transporter YSL9 (YSL9), found in Oryza sativa subsp. japonica (Rice).